The following is a 240-amino-acid chain: Membrane-spanning 4-domains subfamily A member 7 (240 aa).

Residues Met-1–Val-47 are Cytoplasmic-facing. Residues Leu-48–Phe-68 form a helical membrane-spanning segment. Residues Ala-69–Leu-83 are Extracellular-facing. A helical transmembrane segment spans residues Met-84 to Ile-104. The Cytoplasmic portion of the chain corresponds to Ser-105–Asn-121. A helical membrane pass occupies residues Ala-122–Leu-142. The Extracellular segment spans residues Arg-143–Ser-178. The helical transmembrane segment at Val-179–Ala-199 threads the bilayer. The Cytoplasmic segment spans residues Ala-200–Ile-240. Positions Ser-218–Ile-240 are disordered.

It belongs to the MS4A family. In terms of tissue distribution, ubiquitous expression in normal tissues. Expression is more elevated in adult liver, lung, spleen, and heart than in their fetal counterparts, and is higher in normal tissues than in the cancerous tissue or cell lines. Low levels of expression were detected in the promonocytic stage, whereas high levels of expression were detected in mature monocytes.

It localises to the membrane. May be involved in signal transduction as a component of a multimeric receptor complex. The polypeptide is Membrane-spanning 4-domains subfamily A member 7 (MS4A7) (Homo sapiens (Human)).